The sequence spans 144 residues: Small polypeptide DEVIL 15 (144 aa).

N-linked (GlcNAc...) asparagine glycosylation is present at asparagine 8. Residues 22–63 (SSSSKPFFTRSFSTKTSSSPSSKSHFTRSFSTKPSSSSSSSD) form a disordered region. The helical transmembrane segment at 104–120 (ILSKKGASVTGKCFKVA) threads the bilayer. The required for DVL/RTFL small polypeptide activity stretch occupies residues 111 to 142 (SVTGKCFKVAKEHKSRFYIIKRCVLMLVCWHK).

The protein belongs to the DVL/RTFL small polypeptides family.

It localises to the cell membrane. In terms of biological role, small polypeptide acting as a regulatory molecule which coordinates cellular responses required for differentiation, growth and development, probably by restricting polar cell proliferation in lateral organs and coordinating socket cell recruitment and differentiation at trichome sites. This Arabidopsis thaliana (Mouse-ear cress) protein is Small polypeptide DEVIL 15.